A 115-amino-acid chain; its full sequence is NADH-ubiquinone oxidoreductase chain 3 (115 aa).

3 consecutive transmembrane segments (helical) span residues 3-23, 55-75, and 87-107; these read LMLVLLINTTISLVLVTIAFW, FFLVAITFLLFDLEIALLLPL, and VLIMALMLISILALGLAYEWI.

Belongs to the complex I subunit 3 family. As to quaternary structure, core subunit of respiratory chain NADH dehydrogenase (Complex I) which is composed of 45 different subunits. Interacts with TMEM186. Interacts with TMEM242.

The protein resides in the mitochondrion inner membrane. It catalyses the reaction a ubiquinone + NADH + 5 H(+)(in) = a ubiquinol + NAD(+) + 4 H(+)(out). Functionally, core subunit of the mitochondrial membrane respiratory chain NADH dehydrogenase (Complex I) which catalyzes electron transfer from NADH through the respiratory chain, using ubiquinone as an electron acceptor. Essential for the catalytic activity of complex I. The chain is NADH-ubiquinone oxidoreductase chain 3 from Oryctolagus cuniculus (Rabbit).